The chain runs to 253 residues: Glutamate racemase (253 aa).

Residues 7–8 and 39–40 contribute to the substrate site; these read DS and YG. Catalysis depends on C70, which acts as the Proton donor/acceptor. Position 71–72 (71–72) interacts with substrate; that stretch reads NS. The active-site Proton donor/acceptor is the C179. 180–181 contributes to the substrate binding site; sequence TH.

Belongs to the aspartate/glutamate racemases family.

The enzyme catalyses L-glutamate = D-glutamate. It functions in the pathway cell wall biogenesis; peptidoglycan biosynthesis. In terms of biological role, provides the (R)-glutamate required for cell wall biosynthesis. In Nitratiruptor sp. (strain SB155-2), this protein is Glutamate racemase.